The primary structure comprises 930 residues: Zn(2)-C6 fungal-type transcription factor FTF1c (930 aa).

Residues 137–164 constitute a DNA-binding region (zn(2)-C6 fungal-type); the sequence is CIPCRRKKIRCSGEKPACEHCLRSYIPC.

It is found in the nucleus. Functionally, zn(2)-C6 fungal-type transcription factor that has a role in the establishment of the fungus within the plant and/or the progress of the disease. Regulates the expression of virulence factors such as SIX1 and SIX6. This Fusarium oxysporum f. sp. lycopersici (strain 4287 / CBS 123668 / FGSC 9935 / NRRL 34936) (Fusarium vascular wilt of tomato) protein is Zn(2)-C6 fungal-type transcription factor FTF1c.